We begin with the raw amino-acid sequence, 80 residues long: Exodeoxyribonuclease 7 small subunit (80 aa).

Belongs to the XseB family. As to quaternary structure, heterooligomer composed of large and small subunits.

The protein localises to the cytoplasm. The catalysed reaction is Exonucleolytic cleavage in either 5'- to 3'- or 3'- to 5'-direction to yield nucleoside 5'-phosphates.. Its function is as follows. Bidirectionally degrades single-stranded DNA into large acid-insoluble oligonucleotides, which are then degraded further into small acid-soluble oligonucleotides. This Vibrio parahaemolyticus serotype O3:K6 (strain RIMD 2210633) protein is Exodeoxyribonuclease 7 small subunit.